Consider the following 194-residue polypeptide: Peptidyl-tRNA hydrolase (194 aa).

Y17 contacts tRNA. H22 functions as the Proton acceptor in the catalytic mechanism. Y68, N70, and N116 together coordinate tRNA.

The protein belongs to the PTH family. Monomer.

It is found in the cytoplasm. The catalysed reaction is an N-acyl-L-alpha-aminoacyl-tRNA + H2O = an N-acyl-L-amino acid + a tRNA + H(+). Its function is as follows. Hydrolyzes ribosome-free peptidyl-tRNAs (with 1 or more amino acids incorporated), which drop off the ribosome during protein synthesis, or as a result of ribosome stalling. In terms of biological role, catalyzes the release of premature peptidyl moieties from peptidyl-tRNA molecules trapped in stalled 50S ribosomal subunits, and thus maintains levels of free tRNAs and 50S ribosomes. This chain is Peptidyl-tRNA hydrolase, found in Pseudomonas putida (strain GB-1).